Consider the following 209-residue polypeptide: Orotate phosphoribosyltransferase (209 aa).

Residues Arg96, Lys100, His102, and 122–130 each bind 5-phospho-alpha-D-ribose 1-diphosphate; that span reads EDLISTGGS. Ser126 lines the orotate pocket.

The protein belongs to the purine/pyrimidine phosphoribosyltransferase family. PyrE subfamily. In terms of assembly, homodimer. The cofactor is Mg(2+).

It carries out the reaction orotidine 5'-phosphate + diphosphate = orotate + 5-phospho-alpha-D-ribose 1-diphosphate. Its pathway is pyrimidine metabolism; UMP biosynthesis via de novo pathway; UMP from orotate: step 1/2. Catalyzes the transfer of a ribosyl phosphate group from 5-phosphoribose 1-diphosphate to orotate, leading to the formation of orotidine monophosphate (OMP). The sequence is that of Orotate phosphoribosyltransferase from Cytophaga hutchinsonii (strain ATCC 33406 / DSM 1761 / CIP 103989 / NBRC 15051 / NCIMB 9469 / D465).